The sequence spans 100 residues: Urease subunit gamma (100 aa).

It belongs to the urease gamma subunit family. Heterotrimer of UreA (gamma), UreB (beta) and UreC (alpha) subunits. Three heterotrimers associate to form the active enzyme.

It is found in the cytoplasm. The enzyme catalyses urea + 2 H2O + H(+) = hydrogencarbonate + 2 NH4(+). It participates in nitrogen metabolism; urea degradation; CO(2) and NH(3) from urea (urease route): step 1/1. This Acinetobacter baumannii (strain SDF) protein is Urease subunit gamma.